Here is a 123-residue protein sequence, read N- to C-terminus: Small ribosomal subunit protein uS12 (123 aa).

Asp-89 is modified (3-methylthioaspartic acid). The interval 104–123 (TQGVKDRRQRRSKYGAKRPK) is disordered. Residues 110–123 (RRQRRSKYGAKRPK) show a composition bias toward basic residues.

The protein belongs to the universal ribosomal protein uS12 family. In terms of assembly, part of the 30S ribosomal subunit. Contacts proteins S8 and S17. May interact with IF1 in the 30S initiation complex.

Its function is as follows. With S4 and S5 plays an important role in translational accuracy. In terms of biological role, interacts with and stabilizes bases of the 16S rRNA that are involved in tRNA selection in the A site and with the mRNA backbone. Located at the interface of the 30S and 50S subunits, it traverses the body of the 30S subunit contacting proteins on the other side and probably holding the rRNA structure together. The combined cluster of proteins S8, S12 and S17 appears to hold together the shoulder and platform of the 30S subunit. The polypeptide is Small ribosomal subunit protein uS12 (Parvibaculum lavamentivorans (strain DS-1 / DSM 13023 / NCIMB 13966)).